Consider the following 124-residue polypeptide: Conotoxin Im14.2 (124 aa).

An N-terminal signal peptide occupies residues 1–20; the sequence is MARFLSILLCFAMATGLAAG. Positions 21–99 are excised as a propeptide; the sequence is IRYPDRVLGR…AENPVRDPKK (79 aa).

Post-translationally, contain 2 disulfide bonds. As to expression, expressed by the venom duct.

Its subcellular location is the secreted. Its function is as follows. Probable neurotoxin. The protein is Conotoxin Im14.2 of Conus imperialis (Imperial cone).